The following is a 900-amino-acid chain: Chaperone protein ClpB 2 (900 aa).

The region spanning 15–154 is the Clp R domain; that stretch reads PDRFSDPAWE…ESLLRQPSVS (140 aa). 2 repeat regions span residues 18-81 and 91-154; these read FSDP…LADQ and IGED…PSVS. A disordered region spans residues 151-183; the sequence is PSVSPAPAPPPVPTAASAPAPTPRSAPAPRVMA. A compositionally biased stretch (pro residues) spans 154–163; the sequence is SPAPAPPPVP. An NBD1 region spans residues 191-376; sequence ELEREPSALE…RRFQQVLIRE (186 aa). An ATP-binding site is contributed by 244–251; that stretch reads GEPGVGKT. The segment at 377 to 581 is linker; it reads PDLELSLEIL…IADLVARWTG (205 aa). Residues 427 to 557 adopt a coiled-coil conformation; the sequence is IDLIDEAAAQ…LEASQAEAQS (131 aa). The tract at residues 591–803 is NBD2; it reads ERRKLLALES…RIDEVIRFRP (213 aa). An ATP-binding site is contributed by 641–648; that stretch reads GPTGVGKT. The interval 804–900 is C-terminal; it reads LKVKDLVRIV…GASLEFEPLE (97 aa).

This sequence belongs to the ClpA/ClpB family. In terms of assembly, homohexamer. The oligomerization is ATP-dependent.

It is found in the cytoplasm. In terms of biological role, part of a stress-induced multi-chaperone system, it is involved in the recovery of the cell from heat-induced damage, in cooperation with DnaK, DnaJ and GrpE. Acts before DnaK, in the processing of protein aggregates. Protein binding stimulates the ATPase activity; ATP hydrolysis unfolds the denatured protein aggregates, which probably helps expose new hydrophobic binding sites on the surface of ClpB-bound aggregates, contributing to the solubilization and refolding of denatured protein aggregates by DnaK. In Parasynechococcus marenigrum (strain WH8102), this protein is Chaperone protein ClpB 2 (clpB2).